Reading from the N-terminus, the 316-residue chain is Biotin synthase (316 aa).

A Radical SAM core domain is found at N36 to A260. [4Fe-4S] cluster is bound by residues C51, C55, and C58. Positions 95, 126, 186, and 258 each coordinate [2Fe-2S] cluster.

It belongs to the radical SAM superfamily. Biotin synthase family. As to quaternary structure, homodimer. [4Fe-4S] cluster serves as cofactor. It depends on [2Fe-2S] cluster as a cofactor.

The enzyme catalyses (4R,5S)-dethiobiotin + (sulfur carrier)-SH + 2 reduced [2Fe-2S]-[ferredoxin] + 2 S-adenosyl-L-methionine = (sulfur carrier)-H + biotin + 2 5'-deoxyadenosine + 2 L-methionine + 2 oxidized [2Fe-2S]-[ferredoxin]. It functions in the pathway cofactor biosynthesis; biotin biosynthesis; biotin from 7,8-diaminononanoate: step 2/2. Catalyzes the conversion of dethiobiotin (DTB) to biotin by the insertion of a sulfur atom into dethiobiotin via a radical-based mechanism. This Lawsonia intracellularis (strain PHE/MN1-00) protein is Biotin synthase.